A 548-amino-acid chain; its full sequence is Solute carrier family 22 member 7 (548 aa).

Transmembrane regions (helical) follow at residues 21–41, 146–166, 180–200, 204–224, 234–254, 259–279, 346–366, 376–397, 404–423, 432–452, 466–486, and 493–513; these read VALLALPRVLLPLHFLLPIFL, AASTFFFAGVLVGAVAFGYLS, VSTLVLGLASAASVSYVMFAI, LTGSALAGFTIIVMPLELEWL, VLSSTFWTGGMMLLALVGYLI, WLLLAVTLPCAPGILSLWWVP, ISLCCVVVWFGVNFSYYGLSL, YQTQLLFGAVELPSKLLVYLSV, LTQAGTLLGTALAFGTRLLV, TVLAVMGKAFSEAAFTTAYLF, MGLTALVGRLGGSLAPLAALL, and LPKLTYGGIALLAAGTALLLP. Positions 522 to 548 are disordered; the sequence is ETIQDVERKSAPTSLQEEEMPMKQVQN.

Belongs to the major facilitator (TC 2.A.1) superfamily. Organic cation transporter (TC 2.A.1.19) family.

The protein resides in the basolateral cell membrane. Its subcellular location is the apical cell membrane. The protein localises to the cell membrane. It catalyses the reaction orotate(out) + L-glutamate(in) = orotate(in) + L-glutamate(out). The enzyme catalyses 3',5'-cyclic GMP(in) = 3',5'-cyclic GMP(out). It carries out the reaction GMP(in) = GMP(out). The catalysed reaction is 2'-deoxyguanosine(in) = 2'-deoxyguanosine(out). It catalyses the reaction GDP(in) = GDP(out). The enzyme catalyses guanosine(in) = guanosine(out). It carries out the reaction GTP(in) = GTP(out). The catalysed reaction is 3',5'-cyclic AMP(in) = 3',5'-cyclic AMP(out). It catalyses the reaction creatinine(in) = creatinine(out). The enzyme catalyses prostaglandin E2(out) = prostaglandin E2(in). It carries out the reaction 2-oxoglutarate(in) = 2-oxoglutarate(out). The catalysed reaction is glutarate(in) = glutarate(out). It catalyses the reaction urate(out) = urate(in). The enzyme catalyses estrone 3-sulfate(out) = estrone 3-sulfate(in). In terms of biological role, functions as a Na(+)-independent bidirectional multispecific transporter. Contributes to the renal and hepatic elimination of endogenous organic compounds from the systemic circulation into the urine and bile, respectively. Capable of transporting a wide range of purine and pyrimidine nucleobases, nucleosides and nucleotides, with cGMP, 2'deoxyguanosine and GMP being the preferred substrates. Functions as a pH- and chloride-independent cGMP bidirectional facilitative transporter that can regulate both intracellular and extracellular levels of cGMP and may be involved in cGMP signaling pathways. Mediates orotate/glutamate bidirectional exchange and most likely display a physiological role in hepatic release of glutamate into the blood. Involved in renal secretion and possible reabsorption of creatinine. Able to uptake prostaglandin E2 (PGE2) and may contribute to PGE2 renal excretion. Also transports alpha-ketoglutarate and urate. Apart from the orotate/glutamate exchange, the counterions for the uptake of other SLC22A7/OAT2 substrates remain to be identified. This Pongo abelii (Sumatran orangutan) protein is Solute carrier family 22 member 7 (SLC22A7).